Here is a 332-residue protein sequence, read N- to C-terminus: L-lactate dehydrogenase A-like 6A (332 aa).

Ala2 bears the N-acetylalanine mark. 2 positions are modified to N6-acetyllysine; alternate: Lys5 and Lys57. Residue Lys5 is modified to N6-succinyllysine; alternate. Gly29–Lys57 serves as a coordination point for NAD(+). Lys57 is covalently cross-linked (Glycyl lysine isopeptide (Lys-Gly) (interchain with G-Cter in SUMO2); alternate). At Lys81 the chain carries N6-acetyllysine. Arg99 is an NAD(+) binding site. A substrate-binding site is contributed by Arg106. The residue at position 118 (Lys118) is an N6-acetyllysine; alternate. N6-succinyllysine; alternate is present on Lys118. Asn138 provides a ligand contact to NAD(+). Asn138 and Arg169 together coordinate substrate. His193 (proton acceptor) is an active-site residue. Lys232 carries the post-translational modification N6-acetyllysine. Tyr239 carries the post-translational modification Phosphotyrosine. An N6-acetyllysine modification is found at Lys243. Thr248 lines the substrate pocket. Thr309 is subject to Phosphothreonine. Lys318 carries the post-translational modification N6-acetyllysine; alternate. Lys318 carries the N6-succinyllysine; alternate modification. Residue Thr322 is modified to Phosphothreonine.

This sequence belongs to the LDH/MDH superfamily. LDH family. As to expression, testis-specific.

It is found in the cytoplasm. It catalyses the reaction (S)-lactate + NAD(+) = pyruvate + NADH + H(+). It participates in fermentation; pyruvate fermentation to lactate; (S)-lactate from pyruvate: step 1/1. In terms of biological role, catalyzes the interconversion of L-lactate and pyruvate with nicotinamide adenine dinucleotide NAD(+) as a coenzyme. Significantly increases the transcriptional activity of JUN, when overexpressed. This Homo sapiens (Human) protein is L-lactate dehydrogenase A-like 6A (LDHAL6A).